The sequence spans 448 residues: Phosphoglucosamine mutase (448 aa).

The active-site Phosphoserine intermediate is Ser100. Mg(2+) contacts are provided by Ser100, Asp240, Asp242, and Asp244. The residue at position 100 (Ser100) is a Phosphoserine.

The protein belongs to the phosphohexose mutase family. The cofactor is Mg(2+). Activated by phosphorylation.

The enzyme catalyses alpha-D-glucosamine 1-phosphate = D-glucosamine 6-phosphate. In terms of biological role, catalyzes the conversion of glucosamine-6-phosphate to glucosamine-1-phosphate. The polypeptide is Phosphoglucosamine mutase (Bacillus licheniformis (strain ATCC 14580 / DSM 13 / JCM 2505 / CCUG 7422 / NBRC 12200 / NCIMB 9375 / NCTC 10341 / NRRL NRS-1264 / Gibson 46)).